The sequence spans 2334 residues: Genome polyprotein (2334 aa).

The SF3 helicase domain occupies 487-647; that stretch reads QKVVADIHTL…EGWQSTRHGS (161 aa). Y1007 is subject to O-(5'-phospho-RNA)-tyrosine. The region spanning 1102–1237 is the Peptidase C24 domain; it reads GLPGYLRFNG…SKMCTLIDCT (136 aa). Residues H1128, D1145, and C1205 each act as for 3CLpro activity in the active site. The RdRp catalytic domain maps to 1488-1612; it reads GDFLCLDYSK…AMTPMMVSLL (125 aa). C1577 and C1584 are disulfide-bonded. The disordered stretch occupies residues 1760–1784; sequence EGKPRADAPGTATTASVPGTTTDGM. The span at 1767 to 1781 shows a compositional bias: low complexity; that stretch reads APGTATTASVPGTTT.

Mn(2+) is required as a cofactor. In terms of processing, specific enzymatic cleavages by its own cysteine protease yield mature proteins. The protease cleaves itself from the nascent polyprotein autocatalytically. Precursor p41 can be cleaved by viral 3CLpro into protein p19 and VPg, or cleaved by host protease into protein p23/2 and protein p18. VPg is uridylylated by the polymerase and is covalently attached to the 5'-end of the polyadenylated genomic and subgenomic RNAs. This uridylylated form acts as a nucleotide-peptide primer for the polymerase.

The protein resides in the virion. The protein localises to the host cytoplasm. It catalyses the reaction a ribonucleoside 5'-triphosphate + H2O = a ribonucleoside 5'-diphosphate + phosphate + H(+). It carries out the reaction Endopeptidase with a preference for cleavage when the P1 position is occupied by Glu-|-Xaa and the P1' position is occupied by Gly-|-Yaa.. The enzyme catalyses RNA(n) + a ribonucleoside 5'-triphosphate = RNA(n+1) + diphosphate. Together with NTPase and NS4, initiates the formation of the replication complex. Induces the proliferation of the host smooth ER membranes forming long tubular structures. These remodeled membranes probably form the viral factories that contain the replication complex. In terms of biological role, displays NTPase activity, but no helicase activity. Induces the formation of convoluted membranes derived from the host ER. These remodeled membranes probably form the viral factories that contain the replication complex. Together with NS2 and NS4, initiates the formation of the replication complex. Its function is as follows. Probable key protein responsible for the formation of membrane alterations by the virus. Induces the formation of convoluted membranes derived from the host ER. These remodeled membranes probably form the viral factories that contain the replication complex. Together with NS2 and NTPase, initiates the formation of the replication complex. Functionally, viral genome-linked protein is covalently linked to the 5'-end of the positive-strand, negative-strand genomic RNAs and subgenomic RNA. Acts as a genome-linked replication primer. May recruit ribosome to viral RNA thereby promoting viral proteins translation. Interacts with host translation initiation complex to allow the translation of viral proteins. Processes the polyprotein. 3CLpro-RdRp is first released by autocleavage, then all other proteins are cleaved. May cleave polyadenylate-binding protein thereby inhibiting cellular translation. In terms of biological role, replicates genomic and antigenomic RNA by recognizing replications specific signals. Also transcribes a subgenomic mRNA by initiating RNA synthesis internally on antigenomic RNA. This sgRNA codes for structural proteins. Catalyzes the covalent attachment VPg with viral RNAs. Its function is as follows. Capsid protein VP60 self assembles to form an icosahedral capsid with a T=3 symmetry, about 35 nm in diameter, and consisting of 180 capsid proteins. A smaller form of capsid with a diameter of 23 nm might be capsid proteins assembled as icosahedron with T=1 symmetry. The capsid encapsulate VP2 proteins and genomic or subgenomic RNA. Attaches virion to target cells by binding histo-blood group antigens, inducing endocytosis of the viral particle. Acidification of the endosome induces conformational change of capsid protein thereby injecting virus genomic RNA into host cytoplasm. The chain is Genome polyprotein from Lepus europaeus (European hare).